The sequence spans 214 residues: Protein FAM167A (214 aa).

2 disordered regions span residues methionine 1 to histidine 26 and proline 59 to glycine 108. Positions glutamate 118–threonine 156 form a coiled coil.

The protein belongs to the FAM167 (SEC) family. In terms of tissue distribution, expressed in skin, including primary keratinocytes, spleen, kidney, leukocytes, testis, lung, small intestine and prostate.

The polypeptide is Protein FAM167A (FAM167A) (Homo sapiens (Human)).